The following is a 137-amino-acid chain: MLKEFKEFALKGNMIDLAIGVIIGGAFGGLVNSIVNDIFMPIIGLITGGIDFSNMFIQLAGEKQATLSAAKAAGATISYGNFITLLINFLIIAWVLFLFVKSMNKIRRKQEEEETSKKMSLEQQLLSEIRDLLAKKK.

3 helical membrane passes run 15–35 (IDLAIGVIIGGAFGGLVNSIV), 38–58 (IFMPIIGLITGGIDFSNMFIQ), and 80–100 (GNFITLLINFLIIAWVLFLFV).

This sequence belongs to the MscL family. Homopentamer.

The protein resides in the cell inner membrane. In terms of biological role, channel that opens in response to stretch forces in the membrane lipid bilayer. May participate in the regulation of osmotic pressure changes within the cell. This is Large-conductance mechanosensitive channel from Bartonella henselae (strain ATCC 49882 / DSM 28221 / CCUG 30454 / Houston 1) (Rochalimaea henselae).